The chain runs to 195 residues: Pyridoxal 5'-phosphate synthase subunit PdxT (195 aa).

53–55 (GES) provides a ligand contact to L-glutamine. Cysteine 82 functions as the Nucleophile in the catalytic mechanism. L-glutamine is bound by residues arginine 108 and 134-135 (IR). Residues histidine 173 and glutamate 175 each act as charge relay system in the active site.

This sequence belongs to the glutaminase PdxT/SNO family. As to quaternary structure, in the presence of PdxS, forms a dodecamer of heterodimers. Only shows activity in the heterodimer.

The enzyme catalyses aldehydo-D-ribose 5-phosphate + D-glyceraldehyde 3-phosphate + L-glutamine = pyridoxal 5'-phosphate + L-glutamate + phosphate + 3 H2O + H(+). The catalysed reaction is L-glutamine + H2O = L-glutamate + NH4(+). Its pathway is cofactor biosynthesis; pyridoxal 5'-phosphate biosynthesis. Functionally, catalyzes the hydrolysis of glutamine to glutamate and ammonia as part of the biosynthesis of pyridoxal 5'-phosphate. The resulting ammonia molecule is channeled to the active site of PdxS. The protein is Pyridoxal 5'-phosphate synthase subunit PdxT of Methanobrevibacter smithii (strain ATCC 35061 / DSM 861 / OCM 144 / PS).